The primary structure comprises 213 residues: Probable GTP-binding protein EngB (213 aa).

The EngB-type G domain occupies 25-203; that stretch reads EGTEVAFAGR…EDVLNGWLLP (179 aa). GTP-binding positions include 33–40, 60–64, 80–83, 147–150, and 179–184; these read GRSNAGKS, GRTQL, DLPG, TKAD, and AQMFSA. S40 and T62 together coordinate Mg(2+).

This sequence belongs to the TRAFAC class TrmE-Era-EngA-EngB-Septin-like GTPase superfamily. EngB GTPase family. Mg(2+) is required as a cofactor.

In terms of biological role, necessary for normal cell division and for the maintenance of normal septation. This Saccharophagus degradans (strain 2-40 / ATCC 43961 / DSM 17024) protein is Probable GTP-binding protein EngB.